Here is a 581-residue protein sequence, read N- to C-terminus: Probable peptidoglycan D,D-transpeptidase PenA (581 aa).

A helical membrane pass occupies residues Ile-28–Tyr-48. Ser-310 functions as the Acyl-ester intermediate in the catalytic mechanism.

This sequence belongs to the transpeptidase family. FtsI subfamily.

The protein resides in the cell inner membrane. It carries out the reaction Preferential cleavage: (Ac)2-L-Lys-D-Ala-|-D-Ala. Also transpeptidation of peptidyl-alanyl moieties that are N-acyl substituents of D-alanine.. Its pathway is cell wall biogenesis; peptidoglycan biosynthesis. Catalyzes cross-linking of the peptidoglycan cell wall at the division septum. This is Probable peptidoglycan D,D-transpeptidase PenA from Neisseria meningitidis serogroup A / serotype 4A (strain DSM 15465 / Z2491).